Reading from the N-terminus, the 145-residue chain is Putative BCoR-like protein 2 (145 aa).

The span at 1 to 27 shows a compositional bias: basic and acidic residues; the sequence is MKEKLSKKRAEVKGNRSWLEEFLKPSD. The segment at 1–58 is disordered; the sequence is MKEKLSKKRAEVKGNRSWLEEFLKPSDNEEGPPPKNKVLSNNASSQKPTHSSCIPLLR. Residues 38 to 52 show a composition bias toward polar residues; sequence VLSNNASSQKPTHSS.

This sequence belongs to the BCOR family.

In Homo sapiens (Human), this protein is Putative BCoR-like protein 2 (BCORP1).